The chain runs to 804 residues: Protein-lysine N-methyltransferase SMYD4 (804 aa).

112-114 is an S-adenosyl-L-methionine binding site; that stretch reads RSA. Residues 233–574 enclose the SET domain; the sequence is SSVGLCIDPL…KGQEILHCYG (342 aa). C296, C299, C309, C312, C318, C322, H331, and C335 together coordinate Zn(2+). Residues 296–335 form an MYND-type zinc finger; that stretch reads CHRCLKHTLATVPCDGCSYAKYCSQECLQQAWELYHRTEC. S-adenosyl-L-methionine is bound by residues N427, 539 to 540, Y573, and F595; that span reads NH.

This sequence belongs to the class V-like SAM-binding methyltransferase superfamily. Interacts (via MYND-type zinc finger) with HDAC1.

Its subcellular location is the nucleus. The protein resides in the cytoplasm. The enzyme catalyses L-lysyl-[protein] + S-adenosyl-L-methionine = N(6)-methyl-L-lysyl-[protein] + S-adenosyl-L-homocysteine + H(+). Functionally, protein-lysine N-methyltransferase. Monomethylates PRMT5, modulating its transcriptional activity. May also act as a histone methyltransferase. Plays a critical role in cardiac development. Acts as a key epigenetic regulator of gene expression during cardiac development via its dual activities as a methyltransferase and negative regulator of HDAC1. The protein is Protein-lysine N-methyltransferase SMYD4 (SMYD4) of Pongo abelii (Sumatran orangutan).